The primary structure comprises 487 residues: Glutamyl-tRNA(Gln) amidotransferase subunit A (487 aa).

Catalysis depends on charge relay system residues Lys79 and Ser154. Ser178 (acyl-ester intermediate) is an active-site residue.

The protein belongs to the amidase family. GatA subfamily. Heterotrimer of A, B and C subunits.

The catalysed reaction is L-glutamyl-tRNA(Gln) + L-glutamine + ATP + H2O = L-glutaminyl-tRNA(Gln) + L-glutamate + ADP + phosphate + H(+). Its function is as follows. Allows the formation of correctly charged Gln-tRNA(Gln) through the transamidation of misacylated Glu-tRNA(Gln) in organisms which lack glutaminyl-tRNA synthetase. The reaction takes place in the presence of glutamine and ATP through an activated gamma-phospho-Glu-tRNA(Gln). In Heliobacterium modesticaldum (strain ATCC 51547 / Ice1), this protein is Glutamyl-tRNA(Gln) amidotransferase subunit A.